The sequence spans 1083 residues: Ubiquitin-protein ligase E3C (1083 aa).

Basic and acidic residues-rich tracts occupy residues 1 to 10 (MFSFEGDFKT) and 20 to 40 (SRKE…RKRE). A disordered region spans residues 1 to 40 (MFSFEGDFKTRPKVSLGGASRKEEKASLLHRTQEERRKRE). Residues 1–60 (MFSFEGDFKTRPKVSLGGASRKEEKASLLHRTQEERRKREEERRRLKNAVIIQSFIRGYR) form a cis-determinant of acceptor ubiquitin-binding region. The 30-residue stretch at 45 to 74 (RLKNAVIIQSFIRGYRDRKQQYFIQRSAFD) folds into the IQ domain. Positions 354–386 (ASPTGTGCPDSTSDSEDDNEETDQPNSPEDGRV) are disordered. Residues 366 to 376 (SDSEDDNEETD) show a composition bias toward acidic residues. An HECT domain is found at 744 to 1083 (NEPDLKKRIR…IECAAGFELS (340 aa)). A Glycyl lysine isopeptide (Lys-Gly) (interchain with G-Cter in ubiquitin); by autocatalysis cross-link involves residue K903. Residue C1051 is the Glycyl thioester intermediate of the active site.

This sequence belongs to the UBE3C family. In terms of assembly, interacts with 26S proteasomes. Interacts (via the HECT domain) with UBE2D1 and, less efficiently, with UBE2L3. In terms of processing, autoubiquitinated; promoting its own degradation.

The catalysed reaction is S-ubiquitinyl-[E2 ubiquitin-conjugating enzyme]-L-cysteine + [acceptor protein]-L-lysine = [E2 ubiquitin-conjugating enzyme]-L-cysteine + N(6)-ubiquitinyl-[acceptor protein]-L-lysine.. It participates in protein modification; protein ubiquitination. Functionally, E3 ubiquitin-protein ligase that specifically catalyzes 'Lys-29'- and 'Lys-48'-linked polyubiquitin chains. Accepts ubiquitin from the E2 ubiquitin-conjugating enzyme UBE2D1 in the form of a thioester and then directly transfers the ubiquitin to targeted substrates. Associates with the proteasome and promotes elongation of ubiquitin chains on substrates bound to the 26S proteasome. Also catalyzes 'Lys-29'- and 'Lys-48'-linked ubiquitination of 26S proteasome subunit ADRM1/RPN13 in response to proteotoxic stress, impairing the ability of the proteasome to bind and degrade ubiquitin-conjugated proteins. Acts as a negative regulator of autophagy by mediating 'Lys-29'- and 'Lys-48'-linked ubiquitination of PIK3C3/VPS34, promoting its degradation. Can assemble unanchored poly-ubiquitin chains in either 'Lys-29'- or 'Lys-48'-linked polyubiquitin chains; with some preference for 'Lys-48' linkages. Acts as a negative regulator of type I interferon by mediating 'Lys-48'-linked ubiquitination of IRF3 and IRF7, leading to their degradation by the proteasome. Catalyzes ubiquitination and degradation of CAND2. In Mus musculus (Mouse), this protein is Ubiquitin-protein ligase E3C.